The primary structure comprises 425 residues: Serine hydroxymethyltransferase (425 aa).

Residues leucine 123 and 127–129 (GHL) contribute to the (6S)-5,6,7,8-tetrahydrofolate site. The residue at position 232 (lysine 232) is an N6-(pyridoxal phosphate)lysine. Glutamate 248 serves as a coordination point for (6S)-5,6,7,8-tetrahydrofolate.

Belongs to the SHMT family. Homodimer. It depends on pyridoxal 5'-phosphate as a cofactor.

The protein resides in the cytoplasm. It carries out the reaction (6R)-5,10-methylene-5,6,7,8-tetrahydrofolate + glycine + H2O = (6S)-5,6,7,8-tetrahydrofolate + L-serine. It functions in the pathway one-carbon metabolism; tetrahydrofolate interconversion. Its pathway is amino-acid biosynthesis; glycine biosynthesis; glycine from L-serine: step 1/1. In terms of biological role, catalyzes the reversible interconversion of serine and glycine with tetrahydrofolate (THF) serving as the one-carbon carrier. This reaction serves as the major source of one-carbon groups required for the biosynthesis of purines, thymidylate, methionine, and other important biomolecules. Also exhibits THF-independent aldolase activity toward beta-hydroxyamino acids, producing glycine and aldehydes, via a retro-aldol mechanism. In Anaplasma phagocytophilum (strain HZ), this protein is Serine hydroxymethyltransferase.